The primary structure comprises 292 residues: Bis(5'-nucleosyl)-tetraphosphatase, symmetrical (292 aa).

It belongs to the Ap4A hydrolase family.

The catalysed reaction is P(1),P(4)-bis(5'-adenosyl) tetraphosphate + H2O = 2 ADP + 2 H(+). Its function is as follows. Hydrolyzes diadenosine 5',5'''-P1,P4-tetraphosphate to yield ADP. In Yersinia enterocolitica serotype O:8 / biotype 1B (strain NCTC 13174 / 8081), this protein is Bis(5'-nucleosyl)-tetraphosphatase, symmetrical.